A 91-amino-acid polypeptide reads, in one-letter code: DNA-directed RNA polymerase subunit omega (91 aa).

Belongs to the RNA polymerase subunit omega family. In terms of assembly, the RNAP catalytic core consists of 2 alpha, 1 beta, 1 beta' and 1 omega subunit. When a sigma factor is associated with the core the holoenzyme is formed, which can initiate transcription.

It catalyses the reaction RNA(n) + a ribonucleoside 5'-triphosphate = RNA(n+1) + diphosphate. Functionally, promotes RNA polymerase assembly. Latches the N- and C-terminal regions of the beta' subunit thereby facilitating its interaction with the beta and alpha subunits. This chain is DNA-directed RNA polymerase subunit omega, found in Pseudoalteromonas translucida (strain TAC 125).